A 467-amino-acid chain; its full sequence is Polygalacturonase (467 aa).

The first 27 residues, 1 to 27, serve as a signal peptide directing secretion; sequence MALQRRFFQFVIITLLIPSFILGYTSA. Residue Asp-283 is the Proton donor of the active site. Asn-290 carries an N-linked (GlcNAc...) asparagine glycan. His-306 is a catalytic residue.

Belongs to the glycosyl hydrolase 28 family.

Its subcellular location is the secreted. The protein resides in the cell wall. It catalyses the reaction (1,4-alpha-D-galacturonosyl)n+m + H2O = (1,4-alpha-D-galacturonosyl)n + (1,4-alpha-D-galacturonosyl)m.. Functionally, acts in concert with the pectinesterase, in the ripening process. Is involved in cell wall metabolism, specifically in polyuronide degradation. The polypeptide is Polygalacturonase (Actinidia deliciosa (Kiwi)).